Reading from the N-terminus, the 439-residue chain is 3-phosphoshikimate 1-carboxyvinyltransferase (439 aa).

3-phosphoshikimate-binding residues include lysine 29, serine 30, and arginine 34. Lysine 29 contributes to the phosphoenolpyruvate binding site. Phosphoenolpyruvate contacts are provided by glycine 100 and arginine 128. Residues serine 173, serine 174, glutamine 175, serine 201, aspartate 321, and lysine 348 each contribute to the 3-phosphoshikimate site. Residue glutamine 175 participates in phosphoenolpyruvate binding. Aspartate 321 functions as the Proton acceptor in the catalytic mechanism. Phosphoenolpyruvate-binding residues include arginine 352 and arginine 395.

Belongs to the EPSP synthase family. Monomer.

The protein localises to the cytoplasm. The enzyme catalyses 3-phosphoshikimate + phosphoenolpyruvate = 5-O-(1-carboxyvinyl)-3-phosphoshikimate + phosphate. Its pathway is metabolic intermediate biosynthesis; chorismate biosynthesis. Functionally, catalyzes the transfer of the enolpyruvyl moiety of phosphoenolpyruvate (PEP) to the 5-hydroxyl of shikimate-3-phosphate (S3P) to produce enolpyruvyl shikimate-3-phosphate and inorganic phosphate. The polypeptide is 3-phosphoshikimate 1-carboxyvinyltransferase (Halobacterium salinarum (strain ATCC 700922 / JCM 11081 / NRC-1) (Halobacterium halobium)).